Here is a 91-residue protein sequence, read N- to C-terminus: Large ribosomal subunit protein uL23c (91 aa).

The protein belongs to the universal ribosomal protein uL23 family. As to quaternary structure, part of the 50S ribosomal subunit.

The protein resides in the plastid. It is found in the chloroplast. Functionally, binds to 23S rRNA. The sequence is that of Large ribosomal subunit protein uL23c (rpl23) from Picea abies (Norway spruce).